A 143-amino-acid polypeptide reads, in one-letter code: Sporulation-specific cell division protein SsgB (143 aa).

The protein belongs to the SsgA family. In terms of assembly, interacts with SsgA. Interacts with FtsZ (via N-terminus).

Its subcellular location is the cell septum. In terms of biological role, involved in sporulation-specific cell division. Required for early stages of sporulation. Important in the process of growth cessation prior to sporulation-specific cell division. Recruits cell division protein FtsZ to the future septum sites and tethers the contractile ring structure (Z ring) to the cytoplasmic membrane during sporulation. Stimulates polymerization and filament length of FtsZ in vitro. This Frankia casuarinae (strain DSM 45818 / CECT 9043 / HFP020203 / CcI3) protein is Sporulation-specific cell division protein SsgB.